Here is a 279-residue protein sequence, read N- to C-terminus: S-methyl-5'-thioadenosine phosphorylase (279 aa).

Residues Ser-13, 55-56 (RH), and 88-89 (TA) each bind phosphate. Met-191 serves as a coordination point for substrate. Thr-192 is a phosphate binding site. 215–217 (DYD) is a substrate binding site.

Belongs to the PNP/MTAP phosphorylase family. MTAP subfamily. In terms of assembly, homotrimer.

Its subcellular location is the cytoplasm. It localises to the nucleus. The enzyme catalyses S-methyl-5'-thioadenosine + phosphate = 5-(methylsulfanyl)-alpha-D-ribose 1-phosphate + adenine. It functions in the pathway amino-acid biosynthesis; L-methionine biosynthesis via salvage pathway; S-methyl-5-thio-alpha-D-ribose 1-phosphate from S-methyl-5'-thioadenosine (phosphorylase route): step 1/1. In terms of biological role, catalyzes the reversible phosphorylation of S-methyl-5'-thioadenosine (MTA) to adenine and 5-methylthioribose-1-phosphate. Involved in the breakdown of MTA, a major by-product of polyamine biosynthesis. Responsible for the first step in the methionine salvage pathway after MTA has been generated from S-adenosylmethionine. Has broad substrate specificity with 6-aminopurine nucleosides as preferred substrates. The polypeptide is S-methyl-5'-thioadenosine phosphorylase (Aedes aegypti (Yellowfever mosquito)).